We begin with the raw amino-acid sequence, 162 residues long: GTP-dependent dephospho-CoA kinase (162 aa).

The GTP site is built by Asp40, Val41, Val42, Asp59, Lys61, and Glu111.

Belongs to the GTP-dependent DPCK family.

The enzyme catalyses 3'-dephospho-CoA + GTP = GDP + CoA + H(+). Its pathway is cofactor biosynthesis; coenzyme A biosynthesis. Its function is as follows. Catalyzes the GTP-dependent phosphorylation of the 3'-hydroxyl group of dephosphocoenzyme A to form coenzyme A (CoA). The sequence is that of GTP-dependent dephospho-CoA kinase from Sulfurisphaera tokodaii (strain DSM 16993 / JCM 10545 / NBRC 100140 / 7) (Sulfolobus tokodaii).